The chain runs to 79 residues: Putative antitoxin VapB12 (79 aa).

This sequence belongs to the UPF0330 family.

Functionally, possibly the antitoxin component of a type II toxin-antitoxin (TA) system. Its cognate toxin is VapC12 (Potential). The chain is Putative antitoxin VapB12 (vapB12) from Sulfurisphaera tokodaii (strain DSM 16993 / JCM 10545 / NBRC 100140 / 7) (Sulfolobus tokodaii).